The sequence spans 207 residues: LexA repressor (207 aa).

The H-T-H motif DNA-binding region spans 28 to 48 (RAEIARHLGFKSANAAEEHLK). Catalysis depends on for autocatalytic cleavage activity residues serine 124 and lysine 161.

Belongs to the peptidase S24 family. As to quaternary structure, homodimer.

It carries out the reaction Hydrolysis of Ala-|-Gly bond in repressor LexA.. Functionally, represses a number of genes involved in the response to DNA damage (SOS response), including recA and lexA. In the presence of single-stranded DNA, RecA interacts with LexA causing an autocatalytic cleavage which disrupts the DNA-binding part of LexA, leading to derepression of the SOS regulon and eventually DNA repair. This is LexA repressor from Pseudoalteromonas atlantica (strain T6c / ATCC BAA-1087).